Consider the following 391-residue polypeptide: 23S rRNA (uracil(747)-C(5))-methyltransferase RlmC (391 aa).

Cys-5, Cys-13, Cys-16, and Cys-95 together coordinate [4Fe-4S] cluster. S-adenosyl-L-methionine-binding residues include Gln-220, Phe-249, Glu-276, and Asn-322. Cys-349 acts as the Nucleophile in catalysis.

This sequence belongs to the class I-like SAM-binding methyltransferase superfamily. RNA M5U methyltransferase family. RlmC subfamily.

It carries out the reaction uridine(747) in 23S rRNA + S-adenosyl-L-methionine = 5-methyluridine(747) in 23S rRNA + S-adenosyl-L-homocysteine + H(+). Its function is as follows. Catalyzes the formation of 5-methyl-uridine at position 747 (m5U747) in 23S rRNA. This chain is 23S rRNA (uracil(747)-C(5))-methyltransferase RlmC, found in Actinobacillus pleuropneumoniae serotype 5b (strain L20).